Here is a 230-residue protein sequence, read N- to C-terminus: Orotidine 5'-phosphate decarboxylase (230 aa).

Residues Asp10, Lys31, 58-67, Thr117, Arg179, Gln188, Gly208, and Arg209 each bind substrate; that span reads DLKLHDIPNT. Lys60 functions as the Proton donor in the catalytic mechanism.

This sequence belongs to the OMP decarboxylase family. Type 1 subfamily. In terms of assembly, homodimer.

It carries out the reaction orotidine 5'-phosphate + H(+) = UMP + CO2. It functions in the pathway pyrimidine metabolism; UMP biosynthesis via de novo pathway; UMP from orotate: step 2/2. In terms of biological role, catalyzes the decarboxylation of orotidine 5'-monophosphate (OMP) to uridine 5'-monophosphate (UMP). The chain is Orotidine 5'-phosphate decarboxylase from Staphylococcus aureus (strain USA300).